The sequence spans 688 residues: Potassium-transporting ATPase ATP-binding subunit (688 aa).

4 helical membrane-spanning segments follow: residues 37-57, 65-85, 219-239, and 262-282; these read FIVY…LFGI, ILFI…AEAI, IALQ…TASL, and LALL…AIGI. The active-site 4-aspartylphosphate intermediate is the Asp-313. Residues Asp-350, Glu-354, 383–390, and Lys-401 contribute to the ATP site; that span reads FTAKTRMS. Mg(2+) contacts are provided by Asp-524 and Asp-528. The next 3 helical transmembrane spans lie at 586-606, 622-642, and 668-688; these read IAND…GLFP, AILS…PLAL, and IIAP…LGIV.

The protein belongs to the cation transport ATPase (P-type) (TC 3.A.3) family. Type IA subfamily. In terms of assembly, the system is composed of three essential subunits: KdpA, KdpB and KdpC.

It localises to the cell membrane. The catalysed reaction is K(+)(out) + ATP + H2O = K(+)(in) + ADP + phosphate + H(+). Part of the high-affinity ATP-driven potassium transport (or Kdp) system, which catalyzes the hydrolysis of ATP coupled with the electrogenic transport of potassium into the cytoplasm. This subunit is responsible for energy coupling to the transport system and for the release of the potassium ions to the cytoplasm. The chain is Potassium-transporting ATPase ATP-binding subunit from Clostridium perfringens (strain ATCC 13124 / DSM 756 / JCM 1290 / NCIMB 6125 / NCTC 8237 / Type A).